The chain runs to 597 residues: Arginine--tRNA ligase (597 aa).

A 'HIGH' region motif is present at residues 124 to 134; sequence PNVAKPLHVGH.

It belongs to the class-I aminoacyl-tRNA synthetase family. Monomer.

The protein localises to the cytoplasm. It catalyses the reaction tRNA(Arg) + L-arginine + ATP = L-arginyl-tRNA(Arg) + AMP + diphosphate. This is Arginine--tRNA ligase from Agathobacter rectalis (strain ATCC 33656 / DSM 3377 / JCM 17463 / KCTC 5835 / VPI 0990) (Eubacterium rectale).